A 423-amino-acid polypeptide reads, in one-letter code: Putative competence-damage inducible protein (423 aa).

This sequence belongs to the CinA family.

The chain is Putative competence-damage inducible protein from Streptococcus pyogenes serotype M6 (strain ATCC BAA-946 / MGAS10394).